Here is a 266-residue protein sequence, read N- to C-terminus: MDFVAKNLTKLRETNPLVQNITNYVVMNSTANSLLALGASPVMAHAMDELEEMVSIASALVVNIGTLDEYWIPSMEKAAKIASDLKKPIVLDPVGAGATKLRTKTALKILDFADISVLRGNFGEIAAVLGEHGKTRGVDSAAYDSNEAIELSKNAAKEFNTVSAVTGPVDHVSNGKEIYSISNGHSMLSKVTGTGCATTSIIGAFSAVDDPLKAAVSGLVVYGISAEMAFTEAPYPGTFQAKVYDWLYRIDEKLVLEKAKVNKFEI.

Residue methionine 43 participates in substrate binding. Residues arginine 119 and threonine 166 each coordinate ATP. Glycine 193 is a binding site for substrate.

Belongs to the Thz kinase family. Requires Mg(2+) as cofactor.

It catalyses the reaction 5-(2-hydroxyethyl)-4-methylthiazole + ATP = 4-methyl-5-(2-phosphooxyethyl)-thiazole + ADP + H(+). The protein operates within cofactor biosynthesis; thiamine diphosphate biosynthesis; 4-methyl-5-(2-phosphoethyl)-thiazole from 5-(2-hydroxyethyl)-4-methylthiazole: step 1/1. In terms of biological role, catalyzes the phosphorylation of the hydroxyl group of 4-methyl-5-beta-hydroxyethylthiazole (THZ). In Methanococcus maripaludis (strain DSM 14266 / JCM 13030 / NBRC 101832 / S2 / LL), this protein is Hydroxyethylthiazole kinase.